Here is a 580-residue protein sequence, read N- to C-terminus: MVEEASKSEQINITEVWTTTWETPYIMRLALSAGIGGLLFGYNTGVIAGALLYIKEEFGEVDNKTWLQEIIVSMTVAGAIVGAAIGGWYNDKFGRRMSVLIADVLFLLGALVMVIAHAPWVIILGRLLVGFGVGMASMTSPLYISEMSPARIRGALVSTNGLLITGGQFLSYLINLAFVHTPGTWRWMLGVSAIPAIIQFCLMLTLPESPRWLYRNDRKAESRDILERIYPAEMVEAEIAALKESVRAETADEDIIGHTFSDKLRGALSNPVVRHGLAAGITVQVAQQFVGINTVMYYSPTILQFAGYASNKTAMALALITSGLNAVGSVVSMMFVDRYGRRKLMIISMFGIITCLVILAAVFNEASNHAPKIDKRDSRNFAKNATCPAFAPFTASRSPPSNWNCMKCLQYDCGFCSNGAQEYAPGACIVQSADMKALCHSKGRTFFKDGCPSKFGYLAIVFLGLYIIVYAPGMGTVPWIVNSEIYPLRYRGLAGGIAAVSNWMSNLVVSETFLTLTNAVGSSGTFLLFAGSSAVGLFFIWLLVPETKGLQFEEVEKLLEGGFRPSLLRPTTKENQVETP.

12 helical membrane-spanning segments follow: residues 34-54, 69-89, 104-124, 127-147, 161-181, 187-207, 289-309, 316-336, 344-364, 455-475, 493-513, and 524-544; these read GIGG…LLYI, EIIV…GGWY, VLFL…VIIL, LLVG…ISEM, GLLI…FVHT, WMLG…LTLP, FVGI…AGYA, ALAL…MMFV, LMII…AVFN, FGYL…PGMG, LAGG…SETF, and GTFL…WLLV.

Belongs to the major facilitator superfamily. Sugar transporter (TC 2.A.1.1) family.

Its subcellular location is the membrane. Functionally, plasma membrane inositol-proton symporter. The protein is Probable inositol transporter 3 (INT3) of Arabidopsis thaliana (Mouse-ear cress).